We begin with the raw amino-acid sequence, 563 residues long: Grainyhead-like protein 1 homolog (563 aa).

The region spanning 194-428 (NNLGFQYVLE…ELDKPAALFI (235 aa)) is the Grh/CP2 DB domain. Interaction with DNA regions lie at residues 326 to 335 (TDFSTQKGVK) and 372 to 375 (RKLR). The tract at residues 377 to 405 (EDKRAQKRKVQEYTAGALPGGRKKSDGEY) is disordered.

It belongs to the grh/CP2 family. Grainyhead subfamily.

The protein resides in the nucleus. Probable transcription factor. Binds a motif with the core sequence 5'-C[ACT][TG]G-3' in regulatory elements of target genes. Many putative target genes show oscillating expression levels, perhaps as a result of rhythmic variation in accumulation of grh-1. Plays a role in proper cuticle formation and/or barrier function and is required repetitively during development, for successful completion of each molt. Involved in modulating lifespan. Plays a role in defense response to bacteria. May act upstream of the p38 MAP kinase / pmk-1 pathway. May act downstream of the insulin/IGF-1 receptor signaling (IIS) pathway. The sequence is that of Grainyhead-like protein 1 homolog from Caenorhabditis elegans.